Here is a 191-residue protein sequence, read N- to C-terminus: MAAAQVKNEKIGNPKSNRRRRKKRRTEDFSSDSESSSSSSSDESMDDAAEEPKPIKETKSINIDDIDIDSDKETDVNSQEKQNSLRPEPLSNETHEKLSNIKLTTSKLTSVGGSSKNSNIDINQVKKTLAKDKDQLNNEYLMLMASSFSNDLDELRKKPDFTDKSLVLLAKTLQSGSNMFDEETLNAILEQ.

Residues 1 to 101 (MAAAQVKNEK…NETHEKLSNI (101 aa)) form a disordered region. Over residues 32–42 (DSESSSSSSSD) the composition is skewed to low complexity. Residues 50-59 (EEPKPIKETK) are compositionally biased toward basic and acidic residues. Over residues 76–85 (VNSQEKQNSL) the composition is skewed to polar residues.

The protein belongs to the RSA3 family. In terms of assembly, associates with nucleolar pre-ribosomal particles.

It localises to the nucleus. The protein resides in the nucleolus. In terms of biological role, required for efficient biogenesis of the 60S ribosomal subunit. The protein is Ribosome assembly protein 3 (RSA3) of Debaryomyces hansenii (strain ATCC 36239 / CBS 767 / BCRC 21394 / JCM 1990 / NBRC 0083 / IGC 2968) (Yeast).